Consider the following 40-residue polypeptide: Dolichyl-diphosphooligosaccharide--protein glycosyltransferase subunit 4 (40 aa).

At 1–4 (MITD) the chain is on the lumenal side. A helical transmembrane segment spans residues 5 to 25 (VQLAIFSNVLGVFLFLLVVAY). The Cytoplasmic portion of the chain corresponds to 26–40 (HYINANTGKSSPKAK).

It belongs to the OST4 family. As to quaternary structure, component of the oligosaccharyltransferase (OST) complex.

Its subcellular location is the endoplasmic reticulum membrane. Subunit of the oligosaccharyl transferase (OST) complex that catalyzes the initial transfer of a defined glycan (Glc(3)Man(9)GlcNAc(2) in eukaryotes) from the lipid carrier dolichol-pyrophosphate to an asparagine residue within an Asn-X-Ser/Thr consensus motif in nascent polypeptide chains, the first step in protein N-glycosylation. N-glycosylation occurs cotranslationally and the complex associates with the Sec61 complex at the channel-forming translocon complex that mediates protein translocation across the endoplasmic reticulum (ER). All subunits are required for a maximal enzyme activity. The polypeptide is Dolichyl-diphosphooligosaccharide--protein glycosyltransferase subunit 4 (Drosophila persimilis (Fruit fly)).